Here is a 439-residue protein sequence, read N- to C-terminus: Forkhead box protein J1-A (439 aa).

Positions 124 to 218 (KPPYSYATLI…INGAMKKRRL (95 aa)) form a DNA-binding region, fork-head. The segment at 273 to 293 (EHGWNSISDGKSHKRKQPLPK) is disordered. Residues 284–293 (SHKRKQPLPK) are compositionally biased toward basic residues.

It belongs to the FOXJ1 family. In terms of tissue distribution, expressed in two independent areas of stage 10-11 embryos; in the dorsal blastopore lip (Spemann organizer) and shortly after in the ectodermal cells of the animal cap. As development proceeds, cells of the animal cap contribute to the epidermis and show a spotty pattern, which suggests expression in ciliated epidermal cells. Distribution of these cells is uniform in the trunk area of the embryo but more random in the head, being practically absent in the cement gland and olfactory placode. The spotted pattern becomes more dispersed as embryos grow in size. Due to cell movements during gastrulation, expression in the dorsal lip becomes located in the dorsal midline with expression restricted to the neuroectoderm. Expressed transiently in cells of the newly formed neural floor plate in the tail of older tadpoles.

The protein localises to the nucleus. Functionally, key transcription factor required for motile ciliogenesis. Activates genes essential for motile cilia formation and function. Required for ciliogenesis in multiciliated cells. This is Forkhead box protein J1-A (foxj1-a) from Xenopus laevis (African clawed frog).